The sequence spans 161 residues: uncharacterized protein (161 aa).

The helical transmembrane segment at 30–50 (GVILFRLLGVILFRLLGVILF) threads the bilayer.

It is found in the membrane. This is an uncharacterized protein from Homo sapiens (Human).